A 166-amino-acid polypeptide reads, in one-letter code: Small ribosomal subunit protein uS5 (166 aa).

Residues 11–74 form the S5 DRBM domain; that stretch reads LQEKLIAVNR…EKARRNMMNV (64 aa).

It belongs to the universal ribosomal protein uS5 family. Part of the 30S ribosomal subunit. Contacts proteins S4 and S8.

In terms of biological role, with S4 and S12 plays an important role in translational accuracy. Its function is as follows. Located at the back of the 30S subunit body where it stabilizes the conformation of the head with respect to the body. The sequence is that of Small ribosomal subunit protein uS5 from Pectobacterium atrosepticum (strain SCRI 1043 / ATCC BAA-672) (Erwinia carotovora subsp. atroseptica).